A 129-amino-acid polypeptide reads, in one-letter code: D-ribose pyranase 2 (129 aa).

The active-site Proton donor is the histidine 20. Substrate contacts are provided by residues aspartate 28, histidine 96, and tyrosine 118–asparagine 120.

It belongs to the RbsD / FucU family. RbsD subfamily. In terms of assembly, homodecamer.

It localises to the cytoplasm. It catalyses the reaction beta-D-ribopyranose = beta-D-ribofuranose. It functions in the pathway carbohydrate metabolism; D-ribose degradation; D-ribose 5-phosphate from beta-D-ribopyranose: step 1/2. In terms of biological role, catalyzes the interconversion of beta-pyran and beta-furan forms of D-ribose. The sequence is that of D-ribose pyranase 2 from Streptomyces griseus subsp. griseus (strain JCM 4626 / CBS 651.72 / NBRC 13350 / KCC S-0626 / ISP 5235).